A 203-amino-acid chain; its full sequence is Large ribosomal subunit protein uL18 (203 aa).

This sequence belongs to the universal ribosomal protein uL18 family. As to quaternary structure, part of the 50S ribosomal subunit. Contacts the 5S and 23S rRNAs.

Functionally, this is one of the proteins that bind and probably mediate the attachment of the 5S RNA into the large ribosomal subunit, where it forms part of the central protuberance. The protein is Large ribosomal subunit protein uL18 of Pyrococcus horikoshii (strain ATCC 700860 / DSM 12428 / JCM 9974 / NBRC 100139 / OT-3).